A 598-amino-acid chain; its full sequence is Phenylalanine--tRNA ligase beta subunit, cytoplasmic (598 aa).

The region spanning 303–383 is the B5 domain; sequence LAVYDMEVPL…IAYGFNNIPT (81 aa). 4 residues coordinate Mg(2+): D361, D367, E370, and D371.

This sequence belongs to the phenylalanyl-tRNA synthetase beta subunit family. Type 2 subfamily. In terms of assembly, tetramer of two alpha and two beta subunits. Requires Mg(2+) as cofactor.

It localises to the cytoplasm. It is found in the cytosol. It carries out the reaction tRNA(Phe) + L-phenylalanine + ATP = L-phenylalanyl-tRNA(Phe) + AMP + diphosphate + H(+). The polypeptide is Phenylalanine--tRNA ligase beta subunit, cytoplasmic (Arabidopsis thaliana (Mouse-ear cress)).